A 138-amino-acid polypeptide reads, in one-letter code: Putative pre-16S rRNA nuclease (138 aa).

This sequence belongs to the YqgF nuclease family.

It is found in the cytoplasm. Functionally, could be a nuclease involved in processing of the 5'-end of pre-16S rRNA. The chain is Putative pre-16S rRNA nuclease from Clostridium tetani (strain Massachusetts / E88).